Reading from the N-terminus, the 332-residue chain is Glycerol-3-phosphate dehydrogenase [NAD(P)+] (332 aa).

NADPH is bound by residues W13, K34, and K108. The sn-glycerol 3-phosphate site is built by K108, G136, and S138. A140 lines the NADPH pocket. Positions 191, 244, 254, 255, and 256 each coordinate sn-glycerol 3-phosphate. K191 serves as the catalytic Proton acceptor. R255 is an NADPH binding site. Residues V279 and E281 each coordinate NADPH.

Belongs to the NAD-dependent glycerol-3-phosphate dehydrogenase family.

It is found in the cytoplasm. The enzyme catalyses sn-glycerol 3-phosphate + NAD(+) = dihydroxyacetone phosphate + NADH + H(+). It catalyses the reaction sn-glycerol 3-phosphate + NADP(+) = dihydroxyacetone phosphate + NADPH + H(+). The protein operates within membrane lipid metabolism; glycerophospholipid metabolism. Functionally, catalyzes the reduction of the glycolytic intermediate dihydroxyacetone phosphate (DHAP) to sn-glycerol 3-phosphate (G3P), the key precursor for phospholipid synthesis. The protein is Glycerol-3-phosphate dehydrogenase [NAD(P)+] of Francisella tularensis subsp. holarctica (strain FTNF002-00 / FTA).